A 220-amino-acid polypeptide reads, in one-letter code: CASP-like protein 1E1 (220 aa).

The Cytoplasmic portion of the chain corresponds to 1–57 (METPTPRVKPGFNGVGVGMGSSVNGSSRRAGYYMGPAGAVAVAGGGRAAAAAPVDGC). The helical transmembrane segment at 58–78 (SVALRVFVLAATLVSAVVMGV) threads the bilayer. Topologically, residues 79–108 (DRQTSTIRITVTDALPPLEVPLTANWSYSS) are extracellular. A glycan (N-linked (GlcNAc...) asparagine) is linked at asparagine 103. Residues 109 to 129 (AFVYFVVANAMVCLFSAAALA) traverse the membrane as a helical segment. The Cytoplasmic segment spans residues 130–144 (ACRSRAAMVPVMVGD). The helical transmembrane segment at 145 to 165 (LLALALLYSAVGAAAEFGILG) threads the bilayer. The Extracellular segment spans residues 166–187 (ERGNSHVRWPKVCNVYGRFCER). Residues 188–208 (AMAAVIVSLIAAFANLVLLML) form a helical membrane-spanning segment. Residues 209–220 (NILTIHKSSSYY) are Cytoplasmic-facing.

Belongs to the Casparian strip membrane proteins (CASP) family. In terms of assembly, homodimer and heterodimers.

The protein resides in the cell membrane. This chain is CASP-like protein 1E1, found in Zea mays (Maize).